The chain runs to 444 residues: Phosphoglucosamine mutase (444 aa).

Residue serine 102 is the Phosphoserine intermediate of the active site. Residues serine 102, aspartate 241, aspartate 243, and aspartate 245 each contribute to the Mg(2+) site. Serine 102 carries the post-translational modification Phosphoserine.

It belongs to the phosphohexose mutase family. It depends on Mg(2+) as a cofactor. In terms of processing, activated by phosphorylation.

The catalysed reaction is alpha-D-glucosamine 1-phosphate = D-glucosamine 6-phosphate. Catalyzes the conversion of glucosamine-6-phosphate to glucosamine-1-phosphate. The polypeptide is Phosphoglucosamine mutase (Mannheimia succiniciproducens (strain KCTC 0769BP / MBEL55E)).